A 422-amino-acid polypeptide reads, in one-letter code: Phagosome assembly factor 1 (422 aa).

It belongs to the PHAF1 family. In terms of assembly, interacts with BCAS3; the interaction is requrired for the association with the phagophore.

The protein resides in the cytoplasm. It is found in the preautophagosomal structure. Its function is as follows. Plays a regulatory role in autophagic activity. In complex with BCAS3, associates with the autophagosome formation site during both non-selective and selective autophagy. In Mus musculus (Mouse), this protein is Phagosome assembly factor 1.